Consider the following 475-residue polypeptide: MAAAVQRGLPVAGGGESSESEDDGWEIGYLDRASQKLTSPLPTEEKNEIFKKALTTGDISLVEELLDSGISVESSFRYGWTPLMYAASVANVELVRVLLDRGANASFEKDKHTVLITACSARGSQEQILKCVELLLSRNADPNVACRRLMTPIMYAARDGHPQVVALLVAQGAEVNAQDENGYTALTWAARQGHKNVVLKLLELGANKMLQTKDGKTPSEVANKNKHPEIFSLLSLTLNPLEGKLQQLTKEETICKLLTTDSDKEKDYIFSSYAAFGDLEIFLYGLGLEHMTDLLKERDISLRHLLTMRKDEFSKNGIASRDQQKILAALKELAVEEIKFGELPEVAKLEISGDEFLSFLLKLNKQCGHLITAVQNIITELPVSSHKIVLEWASPQNFTSVCEELVSNVEDLSEEVCKLKDLIQKLQNERENDPTHIPSVEEASPWRSRILKRTAVTVCGFGFLLFICKLTFQRK.

The interval 1–24 (MAAAVQRGLPVAGGGESSESEDDG) is disordered. Phosphoserine is present on residues Ser-17, Ser-18, and Ser-20. ANK repeat units lie at residues 45–74 (EKNE…SVES), 78–107 (YGWT…NASF), 110–144 (DKHT…DPNV), 148–177 (RLMT…EVNA), 181–210 (NGYT…NKML), and 214–243 (DGKT…PLEG). In terms of domain architecture, SAM spans 272 to 334 (SYAAFGDLEI…KILAALKELA (63 aa)).

In terms of assembly, interacts with DDX4, PIWIL1, RANBP9 and TDRD1.

It localises to the cytoplasm. Functionally, plays a central role during spermatogenesis by repressing transposable elements and preventing their mobilization, which is essential for the germline integrity. Acts via the piRNA metabolic process, which mediates the repression of transposable elements during meiosis by forming complexes composed of piRNAs and Piwi proteins and governs the methylation and subsequent repression of transposons. Its association with pi-bodies suggests a participation in the primary piRNAs metabolic process. Required prior to the pachytene stage to facilitate the production of multiple types of piRNAs, including those associated with repeats involved in the regulation of retrotransposons. May act by mediating protein-protein interactions during germ cell maturation. The polypeptide is Ankyrin repeat, SAM and basic leucine zipper domain-containing protein 1 (ASZ1) (Loxodonta africana (African elephant)).